Here is a 206-residue protein sequence, read N- to C-terminus: dITP/XTP pyrophosphatase (206 aa).

Residue 7–12 (TSNKDK) coordinates substrate. Residue Asp74 is the Proton acceptor of the active site. Residue Asp74 participates in Mg(2+) binding. Residues Ser75, 159–162 (FGYD), Lys182, and 187–188 (HR) each bind substrate.

The protein belongs to the HAM1 NTPase family. In terms of assembly, homodimer. It depends on Mg(2+) as a cofactor.

It carries out the reaction XTP + H2O = XMP + diphosphate + H(+). It catalyses the reaction dITP + H2O = dIMP + diphosphate + H(+). The enzyme catalyses ITP + H2O = IMP + diphosphate + H(+). Its function is as follows. Pyrophosphatase that catalyzes the hydrolysis of nucleoside triphosphates to their monophosphate derivatives, with a high preference for the non-canonical purine nucleotides XTP (xanthosine triphosphate), dITP (deoxyinosine triphosphate) and ITP. Seems to function as a house-cleaning enzyme that removes non-canonical purine nucleotides from the nucleotide pool, thus preventing their incorporation into DNA/RNA and avoiding chromosomal lesions. This is dITP/XTP pyrophosphatase from Campylobacter hominis (strain ATCC BAA-381 / DSM 21671 / CCUG 45161 / LMG 19568 / NCTC 13146 / CH001A).